We begin with the raw amino-acid sequence, 224 residues long: LRP chaperone MESD (224 aa).

Positions Met-1 to Ala-29 are cleaved as a signal peptide. Residues Met-1–Gly-155 are chaperone domain. Disordered regions lie at residues Tyr-28 to Tyr-49 and Gly-178 to Leu-224. The segment at Ser-156 to Lys-195 is escort domain. Positions Gly-187–Leu-224 are enriched in basic and acidic residues. The N-linked (GlcNAc...) asparagine glycan is linked to Asn-192. Residues Arg-221–Leu-224 carry the Prevents secretion from ER motif.

Belongs to the MESD family. Monomer. Interacts with LRP5; the interaction prevents LRP5 from forming aggregates and chaperones LRP6 to the plasma membrane. Interacts with LRP6; the interaction prevents LRP6 from forming aggregates and chaperones LRP6 to the plasma membrane. Interacts with LRP4; the interaction promotes glycosylation of LRP4 and its cell-surface expression. Expressed in many tissues, but not in skeletal muscles. In the retina expressed in retinal ganglion cells, inner and outer plexiform layers, photoreceptor inner and outer segments and retinal pigment epithelium (at protein level).

The protein localises to the endoplasmic reticulum. Functionally, chaperone specifically assisting the folding of beta-propeller/EGF modules within the family of low-density lipoprotein receptors (LDLRs). Acts as a modulator of the Wnt pathway through chaperoning the coreceptors of the canonical Wnt pathway, LRP5 and LRP6, to the plasma membrane. Essential for specification of embryonic polarity and mesoderm induction. Plays an essential role in neuromuscular junction (NMJ) formation by promoting cell-surface expression of LRP4. May regulate phagocytosis of apoptotic retinal pigment epithelium (RPE) cells. This is LRP chaperone MESD from Mus musculus (Mouse).